A 623-amino-acid chain; its full sequence is Riboflavin biosynthesis protein PYRR, chloroplastic (623 aa).

A chloroplast-targeting transit peptide spans 1-45 (MPLPQPLLGGASPAPARAASSFLHPLLHTRHRVSTAPAAASSFVP). The region spanning 52 to 181 (ANDAMLLRRA…ALRNEGIQVD (130 aa)) is the CMP/dCMP-type deaminase domain.

This sequence in the C-terminal section; belongs to the YbiA family.

The protein resides in the plastid. Its subcellular location is the chloroplast. It catalyses the reaction 5-amino-6-(5-phospho-D-ribitylamino)uracil + NADP(+) = 5-amino-6-(5-phospho-D-ribosylamino)uracil + NADPH + H(+). It carries out the reaction 2,5-diamino-6-hydroxy-4-(5-phosphoribosylamino)-pyrimidine + H2O = 2,5,6-triamino-4-hydroxypyrimidine + D-ribose 5-phosphate. The enzyme catalyses 5-amino-6-(5-phospho-D-ribosylamino)uracil + H2O = 5,6-diaminouracil + D-ribose 5-phosphate. It functions in the pathway cofactor biosynthesis; riboflavin biosynthesis; 5-amino-6-(D-ribitylamino)uracil from GTP: step 3/4. Functionally, pyrimidine reductase involved in the riboflavin biosynthesis pathway. Also has a non-functional N-terminal deaminase domain that lacks the catalytically essential zinc-binding residues. 39% activity when NADH replaces NADPH. No evidence for a phosphatase activity conferred by the N-terminal domain. Its function is as follows. Catalyzes the hydrolysis of the N-glycosidic bond in the first two intermediates of riboflavin biosynthesis, which are highly reactive metabolites, yielding relatively innocuous products. Thus, can divert a surplus of harmful intermediates into relatively harmless products and pre-empt the damage these intermediates would otherwise do. Has no activity against GTP, nucleoside monophosphates or ADP-ribose. The protein is Riboflavin biosynthesis protein PYRR, chloroplastic (PYRR) of Zea mays (Maize).